The chain runs to 188 residues: Protein SSX1 (188 aa).

Disordered stretches follow at residues 1–22 (MNGD…EKRS) and 111–188 (IMPK…EDDE). Positions 20–83 (KRSKAFDDIA…KQATDFQGND (64 aa)) constitute a KRAB-related domain. Residues 115 to 125 (KPAEDENDSKG) show a composition bias toward basic and acidic residues. Ser-123 carries the phosphoserine modification. Residues 153-170 (KRSGPKRGKHAWTHRLRE) show a composition bias toward basic residues. A compositionally biased stretch (acidic residues) spans 179–188 (EISDPEEDDE).

The protein belongs to the SSX family. As to expression, expressed at high level in the testis. Expressed at low level in thyroid. Not detected in tonsil, colon, lung, spleen, prostate, kidney, striated and smooth muscles. Detected in rhabdomyosarcoma and fibrosarcoma cell lines. Not detected in mesenchymal and epithelial cell lines. Expressed in testis.

It localises to the cytoplasm. Its subcellular location is the cytoskeleton. The protein resides in the flagellum axoneme. Could act as a modulator of transcription. Plays a role in spermatogenesis. The polypeptide is Protein SSX1 (SSX1) (Homo sapiens (Human)).